We begin with the raw amino-acid sequence, 239 residues long: Gamma-lactamase MBL2 (239 aa).

6 residues coordinate Zn(2+): His-56, His-58, Asp-60, His-61, His-141, and Asp-165.

The protein belongs to the metallo-beta-lactamase superfamily.

Its function is as follows. Gamma-lactamase; part of the Fusarium detoxification of benzoxazolinone cluster 2 (FDB2) involved in the degradation of benzoxazolinones produced by the host plant. Maize, wheat, and rye produce the 2 benzoxazinone phytoanticipins 2,4-dihy-droxy-7-methoxy-1,4-benzoxazin-3-one (DIMBOA) and 2,4-dihydroxy-1,4-benzoxazin-3-one (DIBOA) that, due to their inherent instability once released, spontaneously degrade to the more stable corresponding benzoxazolinones, 6-methoxy-2-benzoxazolinone (MBOA) and 2-benzoxazolinone (BOA), respectively. The first step in the detoxification of benzoxazolinones involves the hydrolysis of the cyclic ester bond of benzoxazolinones by the FDB1 cluster gamma-lactamase MBL1 to aminophenols. MBL1 is able to convert BOA into 2-aminophenol (2-AP), as well as MBOA into 5-methoxy-2-aminophenol (2-AMP). The FDB2 cluster N-malonyltransferase FDB2/NAT1 then metabolizes aminophenols via N-malonylation to non-toxic malonamic acids. FDB2/NAT1 converts 2-AP into N-(2-hydroxyphenyl) malonamic acid (HPMA) and 2-AMP into N-(2-hydroxy-4-methoxyphenyl) malonamic acid (HMPMA). The duplicated dienlactone hydrolases DLH1 and DLH2 may provide redundant function for hydrolyzing the lactone moiety in the BOA molecule. The roles of the amidases and other enzymes encoded by the 2 FDB clusters have not been identified so far. This Gibberella moniliformis (strain M3125 / FGSC 7600) (Maize ear and stalk rot fungus) protein is Gamma-lactamase MBL2.